The chain runs to 198 residues: Nucleoid occlusion factor SlmA (198 aa).

The HTH tetR-type domain occupies 9–70; the sequence is RNRREEILQA…SLIEFIEDSL (62 aa). Positions 33–52 form a DNA-binding region, H-T-H motif; it reads TTAKLAANVGVSEAALYRHF. Residues 117-144 adopt a coiled-coil conformation; that stretch reads EQDRLQGRINQLFERIEAQLRQVLKERK.

It belongs to the nucleoid occlusion factor SlmA family. In terms of assembly, homodimer. Interacts with FtsZ.

Its subcellular location is the cytoplasm. It is found in the nucleoid. Required for nucleoid occlusion (NO) phenomenon, which prevents Z-ring formation and cell division over the nucleoid. Acts as a DNA-associated cell division inhibitor that binds simultaneously chromosomal DNA and FtsZ, and disrupts the assembly of FtsZ polymers. SlmA-DNA-binding sequences (SBS) are dispersed on non-Ter regions of the chromosome, preventing FtsZ polymerization at these regions. The sequence is that of Nucleoid occlusion factor SlmA from Serratia proteamaculans (strain 568).